The sequence spans 299 residues: F-actin-capping protein subunit alpha-3 (299 aa).

Phosphoserine is present on residues serine 2 and serine 290.

Belongs to the F-actin-capping protein alpha subunit family. In terms of assembly, component of the F-actin capping complex, composed of a heterodimer of an alpha and a beta subunit. Component of the WASH complex, composed of F-actin-capping protein subunit alpha (CAPZA1, CAPZA2 or CAPZA3), F-actin-capping protein subunit beta (CAPZB), WASHC1, WASHC2, WASHC3, WASHC4 and WASHC5. As to expression, exclusively expressed in the testis.

It localises to the cytoplasm. Its subcellular location is the cytoskeleton. Functionally, F-actin-capping proteins bind in a Ca(2+)-independent manner to the fast growing ends of actin filaments (barbed end) thereby blocking the exchange of subunits at these ends. Unlike other capping proteins (such as gelsolin and severin), these proteins do not sever actin filaments. May play a role in the morphogenesis of spermatid. This Mus musculus (Mouse) protein is F-actin-capping protein subunit alpha-3 (Capza3).